The following is a 382-amino-acid chain: MNNINKIFITFLCIELIIGGGGRLLEPLGIFPLRYLLFVFSFILLIFNLVTFNFSITQKCVSLFIWLLLFPFYGFFVGLLAGNKINDILFDVQPYLFMLSLIYLFTLRYTLKVFSCEIFIKIVNAFALYGSLLYISYIILLNFGLLNFNLIYEHLSLTSEFFFRPDGAFFSKSFYFFGVGAIISFVDKKYLKCLIIVLAILLTESRGVLLFTTLSLLLASFKLHKLYLNTIIIILGSVLFIIMLYMVGSRSEDSDSVRFNDLYFYYKNVDLATFLFGRGFGSFILDRLRIEIVPLEILQKTGVIGVFISLVPMLLIFLKGYFLNSTKTSLMMSLILFFSITVSITNPFLFTPMGIFIIGVVVLWVFSIENIQISNNLTSGAK.

Topologically, residues 1 to 3 are cytoplasmic; the sequence is MNN. Residues 4 to 22 traverse the membrane as a helical segment; that stretch reads INKIFITFLCIELIIGGGG. Residues 23–34 are Periplasmic-facing; that stretch reads RLLEPLGIFPLR. The chain crosses the membrane as a helical span at residues 35–54; that stretch reads YLLFVFSFILLIFNLVTFNF. The Cytoplasmic segment spans residues 55 to 62; the sequence is SITQKCVS. A helical membrane pass occupies residues 63–81; it reads LFIWLLLFPFYGFFVGLLA. The Periplasmic portion of the chain corresponds to 82-94; that stretch reads GNKINDILFDVQP. Residues 95–112 form a helical membrane-spanning segment; that stretch reads YLFMLSLIYLFTLRYTLK. The Cytoplasmic portion of the chain corresponds to 113–125; the sequence is VFSCEIFIKIVNA. Residues 126 to 146 form a helical membrane-spanning segment; the sequence is FALYGSLLYISYIILLNFGLL. Residues 147 to 167 lie on the Periplasmic side of the membrane; that stretch reads NFNLIYEHLSLTSEFFFRPDG. Residues 168 to 187 traverse the membrane as a helical segment; the sequence is AFFSKSFYFFGVGAIISFVD. At 188-189 the chain is on the cytoplasmic side; sequence KK. Residues 190–206 form a helical membrane-spanning segment; that stretch reads YLKCLIIVLAILLTESR. The Periplasmic portion of the chain corresponds to 207 to 208; the sequence is GV. The helical transmembrane segment at 209–226 threads the bilayer; the sequence is LLFTTLSLLLASFKLHKL. Over 227–229 the chain is Cytoplasmic; sequence YLN. Residues 230–247 traverse the membrane as a helical segment; the sequence is TIIIILGSVLFIIMLYMV. At 248–300 the chain is on the periplasmic side; sequence GSRSEDSDSVRFNDLYFYYKNVDLATFLFGRGFGSFILDRLRIEIVPLEILQK. The helical transmembrane segment at 301–318 threads the bilayer; it reads TGVIGVFISLVPMLLIFL. Residues 319 to 329 lie on the Cytoplasmic side of the membrane; sequence KGYFLNSTKTS. Residues 330 to 349 traverse the membrane as a helical segment; the sequence is LMMSLILFFSITVSITNPFL. Residues 350–352 are Periplasmic-facing; it reads FTP. A helical transmembrane segment spans residues 353–370; the sequence is MGIFIIGVVVLWVFSIEN. The Cytoplasmic portion of the chain corresponds to 371–382; that stretch reads IQISNNLTSGAK.

The protein localises to the cell inner membrane. The catalysed reaction is n lipid-linked O-antigen repeat units = a lipid-linked O antigen + (n-1) polyisoprenyl diphosphate.. It participates in bacterial outer membrane biogenesis; LPS O-antigen biosynthesis. Functionally, polymerase involved in the biosynthesis of the lipopolysaccharide (LPS). Catalyzes the polymerization of the O-antigen repeat units on the periplasmic face of the inner membrane, leading to the formation of the lipid-linked O-antigen molecule. The protein is O-antigen polymerase of Shigella flexneri.